Here is a 192-residue protein sequence, read N- to C-terminus: Cytochrome b-245 light chain (192 aa).

Topologically, residues 2 to 7 (GQIEWA) are cytoplasmic. The helical transmembrane segment at 8-30 (MWANEQALASGLILITGGIVATA) threads the bilayer. Residues 31-35 (GRFTQ) are Extracellular-facing. Residues 36-53 (WYFGAYSIVAGVLICLLE) form a helical membrane-spanning segment. Residues 54–69 (YPRGKRKKGSTMERCG) lie on the Cytoplasmic side of the membrane. The stretch at 70–80 (QKYLTAVVKLF) is an intramembrane region. The Cytoplasmic portion of the chain corresponds to 81 to 86 (GPLTRN). A helical membrane pass occupies residues 87–104 (YYVRAVLHLLLSVPAGFL). Residue L105 is a topological domain, extracellular. A helical transmembrane segment spans residues 106 to 126 (ATILGTVCLAIASVIYLLAAI). The Cytoplasmic segment spans residues 127-192 (RGEQWTPIEP…NPIPVTDEVV (66 aa)). The tract at residues 134–192 (IEPKPKERPQVGGTIKQPPTNPPPRPPAEVRKKPSEAEEEAASAGGPQVNPIPVTDEVV) is disordered. The residue at position 147 (T147) is a Phosphothreonine. K149 participates in a covalent cross-link: Glycyl lysine isopeptide (Lys-Gly) (interchain with G-Cter in ubiquitin). Phosphoserine is present on residues S168 and S176.

The protein belongs to the p22phox family. As to quaternary structure, component of the phagocyte NADPH oxidase core complex/cytochrome b558 complex, composed of CYBB (heavy chain (beta)) and CYBA (light chain (alpha)). Component of the phagocyte NADPH oxidase complex composed of an obligatory core heterodimer formed by the membrane proteins CYBA and CYBB and the cytosolic regulatory subunits NCF1/p47-phox, NCF2/p67-phox, NCF4/p40-phox and the small GTPase RAC1 or RAC2. Interacts with NCF1 (via SH3 domain). Interacts with SH3PXD2A. Interacts with DUOX1, DUOX2 and TPO. Interacts with NOX4; this interaction mediates superoxide generation. Interacts with calprotectin (S100A8/9). Interacts with GBP7. Interacts with NOXO1. Forms a heterodimer with NOX3 and is essential for activity and cell membrane localization of NOX3. Interacts with NOX1. In terms of processing, phosphorylation at Thr-147 enhances NADPH oxidase activity by promoting NCF1/p47-phox binding. Post-translationally, ubiquitinated at Lys-149 likely by RNF145. In terms of tissue distribution, expressed to a relatively high level in kidney, spleen, thymus and lung, and to a lower level in aorta, adrenals, and heart. Expression is not detected in liver or brain.

The protein localises to the cell membrane. Functionally, subunit of NADPH oxidase complexes that is required for the NADPH oxidase activity that generates, in various cell types, superoxide from molecular oxygen utilizing NADPH as an electron donor. Subunit of the phagocyte NADPH oxidase complex that mediates the transfer of electrons from cytosolic NADPH to O2 to produce the superoxide anion (O2(-)). In the activated complex, electrons are first transferred from NADPH to flavin adenine dinucleotide (FAD) and subsequently transferred via two heme molecules to molecular oxygen, producing superoxide through an outer-sphere reaction. Activation of the NADPH oxidase complex is initiated by the assembly of cytosolic subunits of the NADPH oxidase complex with the core NADPH oxidase complex to form a complex at the plasma membrane or phagosomal membrane. This activation process is initiated by phosphorylation dependent binding of the cytosolic NCF1/p47-phox subunit to the C-terminus of CYBA/p22-phox. Aassociates with NOX3 to form a functional NADPH oxidase constitutively generating superoxide. This is Cytochrome b-245 light chain from Rattus norvegicus (Rat).